Consider the following 295-residue polypeptide: MTHLFEGVGVALTTPFTNNKVNIEALKTHVNFLLENNAQAIIVNGTTAESPTLTTDEKERILKTVIDLVDKRVPVIAGTGTNDTEKSIQASIQAKALGADAIMLITPYYNKTNQRGLVKHFEAIADAVKLPVVLYNVPSRTNMTIEPETVEILSQHPYIVALKDATNDFEYLEEVKKRIDTNSFALYSGNDDNVVEYYQRGGQGVISVIANVIPKEFQALYDAQQSGLDIQDQFKPIGTLLSALSVDINPIPIKALTSYLGFGNYELRLPLVSLEDTDTKVLRETYDTFKAGENE.

Thr47 is a pyruvate binding site. The active-site Proton donor/acceptor is the Tyr135. The active-site Schiff-base intermediate with substrate is Lys163. Pyruvate is bound at residue Ile206.

The protein belongs to the DapA family. As to quaternary structure, homodimer.

The protein localises to the cytoplasm. The enzyme catalyses L-aspartate 4-semialdehyde + pyruvate = (2S,4S)-4-hydroxy-2,3,4,5-tetrahydrodipicolinate + H2O + H(+). It functions in the pathway amino-acid biosynthesis; L-lysine biosynthesis via DAP pathway; (S)-tetrahydrodipicolinate from L-aspartate: step 3/4. Is not feedback inhibited by lysine. Catalyzes the condensation of (S)-aspartate-beta-semialdehyde [(S)-ASA] and pyruvate to 4-hydroxy-tetrahydrodipicolinate (HTPA). In Staphylococcus aureus (strain COL), this protein is 4-hydroxy-tetrahydrodipicolinate synthase.